The following is a 266-amino-acid chain: MSDILNKILAVKADEVAAAKKYRSLASLRSEVEADKDARAALRNFEGALRQKIAAGNAGIIAEIKKASPSKGIIRPDFQPDQIATSYAQHGAACLSVLTDVQFFQGSPDYLKQARAACSLPVLRKDFMIDPYQIYEARSWGADCILLIVAGLDHGLMAELEACAHELGMHVLVEVHNGEELNAALRLKTTLLGVNNRNLRTFETSLQTTLDLLPRIPPEKLVITESAIVTPDDVKKMRDADVHAFLIGETFMRAPDPGQELNRLFS.

This sequence belongs to the TrpC family.

It carries out the reaction 1-(2-carboxyphenylamino)-1-deoxy-D-ribulose 5-phosphate + H(+) = (1S,2R)-1-C-(indol-3-yl)glycerol 3-phosphate + CO2 + H2O. It functions in the pathway amino-acid biosynthesis; L-tryptophan biosynthesis; L-tryptophan from chorismate: step 4/5. The protein is Indole-3-glycerol phosphate synthase of Herminiimonas arsenicoxydans.